Reading from the N-terminus, the 73-residue chain is Kappa-scoloptoxin(03)-Ssm1b (73 aa).

Residues 1–23 (MKPSMAILLVIALIIFSLDKSYS) form the signal peptide. Cystine bridges form between C32/C58, C41/C57, and C44/C67.

Post-translationally, contains 3 disulfide bonds. As to expression, expressed by the venom gland.

Its subcellular location is the secreted. Inhibits voltage-gated potassium channels. This is Kappa-scoloptoxin(03)-Ssm1b from Scolopendra mutilans (Chinese red-headed centipede).